Here is a 359-residue protein sequence, read N- to C-terminus: N-acetyl-gamma-glutamyl-phosphate reductase (359 aa).

The active site involves cysteine 162.

The protein belongs to the NAGSA dehydrogenase family. Type 1 subfamily.

It localises to the cytoplasm. The enzyme catalyses N-acetyl-L-glutamate 5-semialdehyde + phosphate + NADP(+) = N-acetyl-L-glutamyl 5-phosphate + NADPH + H(+). The protein operates within amino-acid biosynthesis; L-arginine biosynthesis; N(2)-acetyl-L-ornithine from L-glutamate: step 3/4. In terms of biological role, catalyzes the NADPH-dependent reduction of N-acetyl-5-glutamyl phosphate to yield N-acetyl-L-glutamate 5-semialdehyde. This chain is N-acetyl-gamma-glutamyl-phosphate reductase, found in Prochlorococcus marinus (strain NATL1A).